The primary structure comprises 100 residues: NAD(P)H-quinone oxidoreductase subunit 4L, chloroplastic (100 aa).

3 helical membrane-spanning segments follow: residues 1 to 21, 30 to 50, and 60 to 80; these read MLEN…YGLT, LMCL…FSSF, and VFAI…LAII.

It belongs to the complex I subunit 4L family. As to quaternary structure, NDH is composed of at least 16 different subunits, 5 of which are encoded in the nucleus.

It is found in the plastid. It localises to the chloroplast thylakoid membrane. It catalyses the reaction a plastoquinone + NADH + (n+1) H(+)(in) = a plastoquinol + NAD(+) + n H(+)(out). It carries out the reaction a plastoquinone + NADPH + (n+1) H(+)(in) = a plastoquinol + NADP(+) + n H(+)(out). Its function is as follows. NDH shuttles electrons from NAD(P)H:plastoquinone, via FMN and iron-sulfur (Fe-S) centers, to quinones in the photosynthetic chain and possibly in a chloroplast respiratory chain. The immediate electron acceptor for the enzyme in this species is believed to be plastoquinone. Couples the redox reaction to proton translocation, and thus conserves the redox energy in a proton gradient. This Staurastrum punctulatum (Green alga) protein is NAD(P)H-quinone oxidoreductase subunit 4L, chloroplastic.